The sequence spans 510 residues: Probable lysine--tRNA ligase, cytoplasmic (510 aa).

This sequence belongs to the class-II aminoacyl-tRNA synthetase family. As to quaternary structure, homodimer.

The protein resides in the cytoplasm. It catalyses the reaction tRNA(Lys) + L-lysine + ATP = L-lysyl-tRNA(Lys) + AMP + diphosphate. The chain is Probable lysine--tRNA ligase, cytoplasmic from Encephalitozoon cuniculi (strain GB-M1) (Microsporidian parasite).